The following is a 497-amino-acid chain: Succinate-semialdehyde dehydrogenase [NADP(+)] (497 aa).

Catalysis depends on glutamate 264, which acts as the Proton acceptor. Cysteine 298 acts as the Nucleophile in catalysis.

Belongs to the aldehyde dehydrogenase family. As to quaternary structure, homotetramer.

It is found in the cytoplasm. The enzyme catalyses succinate semialdehyde + NAD(+) + H2O = succinate + NADH + 2 H(+). It catalyses the reaction succinate semialdehyde + NADP(+) + H2O = succinate + NADPH + 2 H(+). It participates in amino-acid degradation; 4-aminobutanoate degradation. Inhibited by AMP, ADP anf ATP. Functionally, catalyzes the oxidation of succinate semialdehyde to succinate. Can utilize both NAD(+) or NADP(+) as a coenzyme, but has a 2.5-fold lower activity with NADP(+) than with NAD(+). Functions in a gamma-aminobutyrate (GABA) degradation pathway that allows growth utilizing GABA as a nitrogen source. Functions in the GABA shunt, which allows to bypass 2 reactions in the TCA cycle by removing alpha-ketoglutarate from the cycle and feeding succinate and NADH back into the cycle. This chain is Succinate-semialdehyde dehydrogenase [NADP(+)], found in Saccharomyces cerevisiae (strain ATCC 204508 / S288c) (Baker's yeast).